Consider the following 245-residue polypeptide: tRNA pseudouridine synthase A (245 aa).

The active-site Nucleophile is Asp52. Position 111 (Tyr111) interacts with substrate.

Belongs to the tRNA pseudouridine synthase TruA family. Homodimer.

It carries out the reaction uridine(38/39/40) in tRNA = pseudouridine(38/39/40) in tRNA. Formation of pseudouridine at positions 38, 39 and 40 in the anticodon stem and loop of transfer RNAs. The polypeptide is tRNA pseudouridine synthase A (Thermotoga petrophila (strain ATCC BAA-488 / DSM 13995 / JCM 10881 / RKU-1)).